The chain runs to 438 residues: Gamma-glutamyl phosphate reductase (438 aa).

The segment at 1 to 21 is disordered; that stretch reads MTAQTSSDVTDQKTDLTRESE. The span at 10 to 21 shows a compositional bias: basic and acidic residues; that stretch reads TDQKTDLTRESE.

It belongs to the gamma-glutamyl phosphate reductase family.

It localises to the cytoplasm. The catalysed reaction is L-glutamate 5-semialdehyde + phosphate + NADP(+) = L-glutamyl 5-phosphate + NADPH + H(+). The protein operates within amino-acid biosynthesis; L-proline biosynthesis; L-glutamate 5-semialdehyde from L-glutamate: step 2/2. Functionally, catalyzes the NADPH-dependent reduction of L-glutamate 5-phosphate into L-glutamate 5-semialdehyde and phosphate. The product spontaneously undergoes cyclization to form 1-pyrroline-5-carboxylate. This Corynebacterium efficiens (strain DSM 44549 / YS-314 / AJ 12310 / JCM 11189 / NBRC 100395) protein is Gamma-glutamyl phosphate reductase.